We begin with the raw amino-acid sequence, 141 residues long: Large ribosomal subunit protein uL11 (141 aa).

Belongs to the universal ribosomal protein uL11 family. As to quaternary structure, part of the ribosomal stalk of the 50S ribosomal subunit. Interacts with L10 and the large rRNA to form the base of the stalk. L10 forms an elongated spine to which L12 dimers bind in a sequential fashion forming a multimeric L10(L12)X complex. One or more lysine residues are methylated.

Forms part of the ribosomal stalk which helps the ribosome interact with GTP-bound translation factors. This Fervidobacterium nodosum (strain ATCC 35602 / DSM 5306 / Rt17-B1) protein is Large ribosomal subunit protein uL11.